Consider the following 382-residue polypeptide: MRKELKYLICFNILLLLSIIYYTFDLLTLCIDDTVKDAILEEDLNPDAPPKPQLIPKIIHQTYKTEDIPEHWKEGRQKCLDLHPDYKYILWTDEMAYEFIKEEYPWFLDTFENYKYPIERADAIRYFILSHYGGVYIDLDDGCERKLDPLLAFPAFLRKTSPLGVSNDVMGSVPRHPFFLKALKSLKHYDKYWFIPYMTIMGSTGPLFLSVIWKQYKRWRIPKNGTVRILQPAYYKMHSYSFFSITKGSSWHLDDAKLMKALENHILSCVVTGFIFGFFILYGEFTFYCWLCSKNFSNLTKNWKLNAIKVRFVTILNSLGLRLKLSKSTSDTASATLLARQQKRLRKDSNTNIVLLKSSRKSDVYDLEKNDSSKYSLGNNSS.

Residues 1–6 (MRKELK) lie on the Cytoplasmic side of the membrane. A helical membrane pass occupies residues 7–27 (YLICFNILLLLSIIYYTFDLL). Residues 28–269 (TLCIDDTVKD…KALENHILSC (242 aa)) are Extracellular-facing. The chain crosses the membrane as a helical span at residues 270-290 (VVTGFIFGFFILYGEFTFYCW). Topologically, residues 291-382 (LCSKNFSNLT…SKYSLGNNSS (92 aa)) are cytoplasmic. Residue Ser-349 is modified to Phosphoserine.

This sequence belongs to the glycosyltransferase 32 family. In terms of assembly, heterodimer of SUR1 and CSG2.

It is found in the membrane. The enzyme catalyses a 1D-myo-inositol-1-phospho-N-[(R)-2-hydroxy-very-long-chain fatty acyl]-(R)-4-hydroxysphingoid base + GDP-alpha-D-mannose = an alpha-D-mannosyl-(1&lt;-&gt;6)-1D-myo-inositol-1-phospho-N-[(R)-2-hydroxy-very-long-chain fatty acyl]-(R)-4-hydroxysphingoid base + GDP + H(+). Its function is as follows. Involved in the synthesis of mannosyl phosphorylinositol ceramide. Catalyzes the addition of mannosyl to phosphorylinositol ceramide. Suppressor of RVS161 mutation. The sequence is that of Mannosyl phosphorylinositol ceramide synthase SUR1 from Saccharomyces cerevisiae (strain ATCC 204508 / S288c) (Baker's yeast).